We begin with the raw amino-acid sequence, 222 residues long: 2-hydroxy-3-keto-5-methylthiopentenyl-1-phosphate phosphatase (222 aa).

It belongs to the HAD-like hydrolase superfamily. MtnX family.

The enzyme catalyses 2-hydroxy-5-methylsulfanyl-3-oxopent-1-enyl phosphate + H2O = 1,2-dihydroxy-5-(methylsulfanyl)pent-1-en-3-one + phosphate. It functions in the pathway amino-acid biosynthesis; L-methionine biosynthesis via salvage pathway; L-methionine from S-methyl-5-thio-alpha-D-ribose 1-phosphate: step 4/6. Its function is as follows. Dephosphorylates 2-hydroxy-3-keto-5-methylthiopentenyl-1-phosphate (HK-MTPenyl-1-P) yielding 1,2-dihydroxy-3-keto-5-methylthiopentene (DHK-MTPene). In Brevibacillus brevis (strain 47 / JCM 6285 / NBRC 100599), this protein is 2-hydroxy-3-keto-5-methylthiopentenyl-1-phosphate phosphatase.